Here is an 81-residue protein sequence, read N- to C-terminus: MSHIVKIYDTCIGCTQCVRACPLDVLEMVPWDGCKAEQMASAPRTEDCVGCKRCESACPTDFLSVRVYTSSESTRSMGLAY.

2 4Fe-4S ferredoxin-type domains span residues Ser2–Trp31 and Met39–Tyr68. [4Fe-4S] cluster is bound by residues Cys11, Cys14, Cys17, Cys21, Cys48, Cys51, Cys54, and Cys58.

In terms of assembly, the eukaryotic PSI reaction center is composed of at least 11 subunits. [4Fe-4S] cluster serves as cofactor.

The protein resides in the plastid. It localises to the chloroplast thylakoid membrane. It catalyses the reaction reduced [plastocyanin] + hnu + oxidized [2Fe-2S]-[ferredoxin] = oxidized [plastocyanin] + reduced [2Fe-2S]-[ferredoxin]. Its function is as follows. Apoprotein for the two 4Fe-4S centers FA and FB of photosystem I (PSI); essential for photochemical activity. FB is the terminal electron acceptor of PSI, donating electrons to ferredoxin. The C-terminus interacts with PsaA/B/D and helps assemble the protein into the PSI complex. Required for binding of PsaD and PsaE to PSI. PSI is a plastocyanin/cytochrome c6-ferredoxin oxidoreductase, converting photonic excitation into a charge separation, which transfers an electron from the donor P700 chlorophyll pair to the spectroscopically characterized acceptors A0, A1, FX, FA and FB in turn. The protein is Photosystem I iron-sulfur center of Stigeoclonium helveticum (Green alga).